The sequence spans 241 residues: Proteasome subunit alpha type-5 (241 aa).

Belongs to the peptidase T1A family. As to quaternary structure, the 26S proteasome consists of a 20S proteasome core and two 19S regulatory subunits. The 20S proteasome core is composed of 28 subunits that are arranged in four stacked rings, resulting in a barrel-shaped structure. The two end rings are each formed by seven alpha subunits, and the two central rings are each formed by seven beta subunits. The catalytic chamber with the active sites is on the inside of the barrel.

The protein resides in the cytoplasm. It localises to the nucleus. Functionally, the proteasome is a multicatalytic proteinase complex which is characterized by its ability to cleave peptides with Arg, Phe, Tyr, Leu, and Glu adjacent to the leaving group at neutral or slightly basic pH. The proteasome has an ATP-dependent proteolytic activity. This Dictyostelium discoideum (Social amoeba) protein is Proteasome subunit alpha type-5 (psmA5).